A 261-amino-acid chain; its full sequence is MICOS complex subunit Mic25 (261 aa).

Residue Gly-2 is the site of N-myristoyl glycine attachment. Phosphoserine is present on residues Ser-13, Ser-31, and Ser-33. Disordered stretches follow at residues 39-59 (KDCSQPSAGEQLAPGPGPECS), 81-114 (CGPAEGTYKAPQGDFKVSRAENSDGQQSSAVKED), and 140-165 (TEKHLKASLPKKKATHEQQQSDRLTR). Residues 109–202 (SAVKEDLKKF…AELYKLSSQQ (94 aa)) are a coiled coil. The span at 154 to 165 (THEQQQSDRLTR) shows a compositional bias: basic and acidic residues. In terms of domain architecture, CHCH spans 220–261 (EPVCSGLQAQILRCYRDHLHEVLLCSDLAKAYQHCVSTARKG). 2 consecutive short sequence motifs (cx9C motif) follow at residues 223–233 (CSGLQAQILRC) and 244–254 (CSDLAKAYQHC). Intrachain disulfides connect Cys-223–Cys-254 and Cys-233–Cys-244.

It belongs to the MICOS complex subunit Mic19 family. Metazoan Mic25 subfamily. In terms of assembly, component of the mitochondrial contact site and cristae organizing system (MICOS) complex, composed of at least MICOS10/MIC10, CHCHD3/MIC19, CHCHD6/MIC25, APOOL/MIC27, IMMT/MIC60, APOO/MIC23/MIC26 and MICOS13/MIC13. This complex was also known under the names MINOS or MitOS complex. The MICOS complex associates with mitochondrial outer membrane proteins SAMM50, MTX1 and MTX2 (together described as components of the mitochondrial outer membrane sorting assembly machinery (SAM) complex) and DNAJC11, mitochondrial inner membrane protein TMEM11 and with HSPA9. The MICOS and SAM complexes together with DNAJC11 are part of a large protein complex spanning both membranes termed the mitochondrial intermembrane space bridging (MIB) complex. Interacts with DISC1. Interacts with IMMT/MIC60.

The protein localises to the mitochondrion inner membrane. The protein resides in the mitochondrion. In terms of biological role, component of the MICOS complex, a large protein complex of the mitochondrial inner membrane that plays crucial roles in the maintenance of crista junctions, inner membrane architecture, and formation of contact sites to the outer membrane. The protein is MICOS complex subunit Mic25 (Chchd6) of Rattus norvegicus (Rat).